The following is a 2098-amino-acid chain: Unconventional myosin heavy chain 6 (2098 aa).

Residues 62 to 732 (QGVEDMCQLG…HDLVLEQEYY (671 aa)) enclose the Myosin motor domain. 155–162 (GESGAGKT) contributes to the ATP binding site. Actin-binding stretches follow at residues 609–631 (LEQL…KPNE) and 711–725 (QLGK…KHDL). IQ domains are found at residues 735–757 (LKDK…DFEK), 758–787 (QRQA…GFSR), and 804–833 (LRKT…RGEK). The segment at 860-898 (FLPSDGKDSGNENDSADSSRRGSYSRLHTSPVMPPANIP) is disordered. A MyTH4 1 domain is found at 929 to 1168 (HVKKPLKTAL…PSYVELQANK (240 aa)). Residues 1171-1211 (KPVVLAVTFMDGSVKTLCADSATTAAELCKQLAEKVGLTNS) form the Ras-associating domain. Positions 1173 to 1481 (VVLAVTFMDG…MFLEGLKKRS (309 aa)) constitute an FERM 1 domain. Residues 1479–1547 (KRSRYLVAIK…RAENVYVLPT (69 aa)) enclose the SH3 domain. A MyTH4 2 domain is found at 1624–1772 (FSREHIDQPL…PHLVEVEAIQ (149 aa)). In terms of domain architecture, FERM 2 spans 1778 to 2086 (IFHKVFFPDN…SYISLLISNQ (309 aa)).

The protein belongs to the TRAFAC class myosin-kinesin ATPase superfamily. Myosin family. As to quaternary structure, interacts with unc-98.

The protein resides in the cytoplasm. Its function is as follows. Myosins are actin-based motor molecules with ATPase activity. Unconventional myosins serve in intracellular movements. Their highly divergent tails are presumed to bind to membranous compartments, which would be moved relative to actin filaments. This Caenorhabditis elegans protein is Unconventional myosin heavy chain 6.